Consider the following 901-residue polypeptide: Probable inorganic carbon transporter subunit DabA (901 aa).

Residues C424, D426, H606, and C621 each coordinate Zn(2+).

This sequence belongs to the inorganic carbon transporter (TC 9.A.2) DabA family. Forms a complex with DabB. It depends on Zn(2+) as a cofactor.

The protein resides in the cell membrane. In terms of biological role, part of an energy-coupled inorganic carbon pump. This Staphylococcus aureus (strain bovine RF122 / ET3-1) protein is Probable inorganic carbon transporter subunit DabA.